The primary structure comprises 92 residues: MIGFAECECIIYDAGSLKEKRAVLKRILTRVQNKFNVSISEIGYQDTWQRTSFGIAAVSSSRVQTEKELQRVLAFIDSFPEIERTITRTEWF.

This is an uncharacterized protein from Bacillus subtilis (strain 168).